The following is a 161-amino-acid chain: Regulator of ribonuclease activity A (161 aa).

This sequence belongs to the RraA family. In terms of assembly, homotrimer. Binds to both RNA-binding sites in the C-terminal region of Rne and to RhlB.

It is found in the cytoplasm. In terms of biological role, globally modulates RNA abundance by binding to RNase E (Rne) and regulating its endonucleolytic activity. Can modulate Rne action in a substrate-dependent manner by altering the composition of the degradosome. Modulates RNA-binding and helicase activities of the degradosome. In Yersinia pseudotuberculosis serotype O:1b (strain IP 31758), this protein is Regulator of ribonuclease activity A.